The sequence spans 394 residues: C-19 steroid 1alpha-hydroxylase (394 aa).

Residues histidine 81, arginine 85, arginine 281, glycine 335, histidine 338, and cysteine 340 each coordinate heme b.

The protein belongs to the cytochrome P450 family. Heme b serves as cofactor.

The catalysed reaction is testosterone + 2 reduced [2Fe-2S]-[ferredoxin] + O2 + 2 H(+) = 1alpha-hydroxytestosterone + 2 oxidized [2Fe-2S]-[ferredoxin] + H2O. It catalyses the reaction androst-4-ene-3,17-dione + 2 reduced [2Fe-2S]-[ferredoxin] + O2 + 2 H(+) = 1alpha-hydroxyandrost-4-ene-3,17-dione + 2 oxidized [2Fe-2S]-[ferredoxin] + H2O. Its function is as follows. Hydroxylase that can catalyze the in vitro conversion of the sesquiterpenoid nootkatone, a natural organic compound produced by some plants, to at least five hydrophilic products. The native ferredoxin reductase FdR_B and either Fdx2 or Fdx8 ferredoxins can act as the redox partners for the conversion of nootkatone. In addition, acts as a steroid 1alpha-hydroxylase, when associated in vitro with the surrogate redox partners bovine adrenodoxin (Adx) and adrenodoxin reductase (Adr). Acts on several C-19 steroid substrates, including testosterone and androstenedione, which are hydroxylated to 1alpha-hydroxytestosterone and 1alpha-hydroxyandrostenedione, respectively. Can use their derivatives testosterone-acetate and 11-oxoandrostenedione, but not vitamin D3 and 25-hydroxyvitamin D3. Also catalyzes the hydroxylation of the C-21 steroid 11-deoxycorticosterone to 1alpha-hydroxy-11-deoxycorticosterone. Catalyzes the hydroxylation of the C-21 steroid progesterone, leading to the formation of seven products: two major (1alpha-hydroxyprogesterone and 17alpha-hydroxyprogesterone) and five minor products. The protein is C-19 steroid 1alpha-hydroxylase of Sorangium cellulosum (strain So ce56) (Polyangium cellulosum (strain So ce56)).